A 183-amino-acid chain; its full sequence is Translation initiation factor IF-3 (183 aa).

It belongs to the IF-3 family. As to quaternary structure, monomer.

It localises to the cytoplasm. Functionally, IF-3 binds to the 30S ribosomal subunit and shifts the equilibrium between 70S ribosomes and their 50S and 30S subunits in favor of the free subunits, thus enhancing the availability of 30S subunits on which protein synthesis initiation begins. The polypeptide is Translation initiation factor IF-3 (Pseudomonas fluorescens (strain SBW25)).